The following is a 579-amino-acid chain: Probable pectinesterase/pectinesterase inhibitor 7 (579 aa).

The signal sequence occupies residues 1 to 20 (MESPIFILITLSFFLQSVLA). The pectinesterase inhibitor 7 stretch occupies residues 22–185 (SQTLSNSSTI…TKLLGVSLAL (164 aa)). N-linked (GlcNAc...) asparagine glycosylation is found at N27, N115, N174, N274, N277, N287, N326, and N333. A pectinesterase 7 region spans residues 265 to 564 (VTVSQDGTGN…TVTGLFIEAD (300 aa)). T342 is a binding site for substrate. An N-linked (GlcNAc...) asparagine glycan is attached at N359. Q372 contacts substrate. D395 acts as the Proton donor; for pectinesterase activity in catalysis. The cysteines at positions 409 and 429 are disulfide-linked. Catalysis depends on D416, which acts as the Nucleophile; for pectinesterase activity. N462 and N475 each carry an N-linked (GlcNAc...) asparagine glycan. Substrate is bound by residues R484 and W486. N526, N533, N547, and N553 each carry an N-linked (GlcNAc...) asparagine glycan.

This sequence in the N-terminal section; belongs to the PMEI family. In the C-terminal section; belongs to the pectinesterase family. Expressed in siliques.

The protein localises to the secreted. The protein resides in the cell wall. The enzyme catalyses [(1-&gt;4)-alpha-D-galacturonosyl methyl ester](n) + n H2O = [(1-&gt;4)-alpha-D-galacturonosyl](n) + n methanol + n H(+). Its pathway is glycan metabolism; pectin degradation; 2-dehydro-3-deoxy-D-gluconate from pectin: step 1/5. Functionally, acts in the modification of cell walls via demethylesterification of cell wall pectin. This chain is Probable pectinesterase/pectinesterase inhibitor 7 (PME7), found in Arabidopsis thaliana (Mouse-ear cress).